Here is a 427-residue protein sequence, read N- to C-terminus: UDP-N-acetylglucosamine 1-carboxyvinyltransferase 1 (427 aa).

Residue 24 to 25 coordinates phosphoenolpyruvate; it reads KN. UDP-N-acetyl-alpha-D-glucosamine is bound at residue R97. C121 serves as the catalytic Proton donor. C121 is modified (2-(S-cysteinyl)pyruvic acid O-phosphothioketal). Residues 126–130, D309, and V331 each bind UDP-N-acetyl-alpha-D-glucosamine; that span reads RPIDL.

The protein belongs to the EPSP synthase family. MurA subfamily.

The protein resides in the cytoplasm. It carries out the reaction phosphoenolpyruvate + UDP-N-acetyl-alpha-D-glucosamine = UDP-N-acetyl-3-O-(1-carboxyvinyl)-alpha-D-glucosamine + phosphate. It functions in the pathway cell wall biogenesis; peptidoglycan biosynthesis. In terms of biological role, cell wall formation. Adds enolpyruvyl to UDP-N-acetylglucosamine. In Lactococcus lactis subsp. lactis (strain IL1403) (Streptococcus lactis), this protein is UDP-N-acetylglucosamine 1-carboxyvinyltransferase 1.